A 477-amino-acid polypeptide reads, in one-letter code: Salivary plasminogen activator alpha 2 (477 aa).

Residues 1–36 form the signal peptide; the sequence is MVNTMKTKLLCVLLLCGAVFSLPRQETYRQLARGSR. The Fibronectin type-I domain maps to 40 to 82; that stretch reads VACRDEKTQMIYQQQESWLRPEVRSKRVEHCRCDRGLAQCHTV. Intrachain disulfides connect Cys-42-Cys-72, Cys-70-Cys-79, Cys-87-Cys-98, Cys-92-Cys-109, Cys-111-Cys-120, Cys-128-Cys-209, Cys-149-Cys-191, Cys-180-Cys-204, Cys-214-Cys-345, Cys-257-Cys-273, Cys-265-Cys-334, Cys-359-Cys-434, Cys-391-Cys-407, and Cys-424-Cys-452. One can recognise an EGF-like domain in the interval 83–121; it reads PVKSCSELRCFNGGTCWQAASFSDFVCQCPKGYTGKQCE. A Kringle domain is found at 128 to 209; that stretch reads CYKDQGVTYR…ILEFCSVPVC (82 aa). The N-linked (GlcNAc...) asparagine glycan is linked to Asn-185. Residues 226-476 form the Peptidase S1 domain; the sequence is STGGLFTDIT…YLGWIRDNMR (251 aa). Catalysis depends on charge relay system residues His-272 and Asp-321. Residue Asn-398 is glycosylated (N-linked (GlcNAc...) asparagine). The active-site Charge relay system is Ser-428.

This sequence belongs to the peptidase S1 family. As to quaternary structure, monomer.

The protein resides in the secreted. It catalyses the reaction Specific cleavage of Arg-|-Val bond in plasminogen to form plasmin.. Its activity is regulated as follows. Activity toward plasminogen is stimulated in the presence of fibrin I. Functionally, probably essential to support the feeding habits of this exclusively haematophagous animal. Probable potent thrombolytic agent. This Desmodus rotundus (Vampire bat) protein is Salivary plasminogen activator alpha 2.